The primary structure comprises 162 residues: Selenoprotein F (162 aa).

The signal sequence occupies residues 1-28; that stretch reads MAAEPGGWLGPALGLRLLLATALQMVSA. Position 93 (Sec-93) is a non-standard amino acid, selenocysteine.

The protein belongs to the selenoprotein M/F family. In terms of assembly, forms a tight complex with UGGT1/UGCGL1. Interacts with UGGT2/UGCGL2. Interacts with RDH11.

Its subcellular location is the endoplasmic reticulum lumen. Functionally, may be involved in redox reactions associated with the formation of disulfide bonds. May contribute to the quality control of protein folding in the endoplasmic reticulum. May regulate protein folding by enhancing the catalytic activity of UGGT1/UGCGL1 and UGGT2/UGCGL2. The protein is Selenoprotein F of Sus scrofa (Pig).